Consider the following 493-residue polypeptide: Cobyric acid synthase (493 aa).

One can recognise a GATase cobBQ-type domain in the interval 255 to 441 (ELEIAVLRLP…LHGLLENGRW (187 aa)). Cys336 serves as the catalytic Nucleophile. The active site involves His433.

It belongs to the CobB/CobQ family. CobQ subfamily.

It functions in the pathway cofactor biosynthesis; adenosylcobalamin biosynthesis. In terms of biological role, catalyzes amidations at positions B, D, E, and G on adenosylcobyrinic A,C-diamide. NH(2) groups are provided by glutamine, and one molecule of ATP is hydrogenolyzed for each amidation. The protein is Cobyric acid synthase of Synechococcus sp. (strain RCC307).